The chain runs to 443 residues: tRNA-2-methylthio-N(6)-dimethylallyladenosine synthase (443 aa).

The region spanning 3 to 120 is the MTTase N-terminal domain; that stretch reads SKLYIRTFGC…LPDLIDARRR (118 aa). [4Fe-4S] cluster is bound by residues cysteine 12, cysteine 49, cysteine 83, cysteine 157, cysteine 161, and cysteine 164. The 233-residue stretch at 143–375 folds into the Radical SAM core domain; it reads RTEGSTAFVS…QEKIQLNAQA (233 aa). The TRAM domain occupies 378-441; the sequence is QGMVDTVQRI…SHTLRGEISD (64 aa).

Belongs to the methylthiotransferase family. MiaB subfamily. As to quaternary structure, monomer. The cofactor is [4Fe-4S] cluster.

Its subcellular location is the cytoplasm. The enzyme catalyses N(6)-dimethylallyladenosine(37) in tRNA + (sulfur carrier)-SH + AH2 + 2 S-adenosyl-L-methionine = 2-methylsulfanyl-N(6)-dimethylallyladenosine(37) in tRNA + (sulfur carrier)-H + 5'-deoxyadenosine + L-methionine + A + S-adenosyl-L-homocysteine + 2 H(+). Its function is as follows. Catalyzes the methylthiolation of N6-(dimethylallyl)adenosine (i(6)A), leading to the formation of 2-methylthio-N6-(dimethylallyl)adenosine (ms(2)i(6)A) at position 37 in tRNAs that read codons beginning with uridine. The sequence is that of tRNA-2-methylthio-N(6)-dimethylallyladenosine synthase from Nitrosomonas europaea (strain ATCC 19718 / CIP 103999 / KCTC 2705 / NBRC 14298).